The sequence spans 444 residues: Putative permease IIC component YwbA (444 aa).

In terms of domain architecture, PTS EIIC type-3 spans 8-421; that stretch reads MEEKIMPVAG…LITCAIYYPF (414 aa). A run of 10 helical transmembrane segments spans residues 31 to 51, 72 to 92, 104 to 124, 138 to 158, 187 to 207, 223 to 243, 246 to 266, 291 to 311, 349 to 371, and 402 to 422; these read GIILTMPLIIIGSVFLILTSL, LGYPVNASFDIMAMIAAFGIA, LSAGAISIAAFLLATPFEVPF, GIPITLLGSKGLFVAMLIALF, FVALIPGFIIVLLVWLARLLI, LGTPLSILGGSLGGSLIAEFV, LLWSCGIHGASIIGGIMAPIW, FFQIWINVGGSGATLALVLTM, PLLIVPFIIAPLLTITATYIGMS, and SGAVMQLVNLLITCAIYYPFF.

It localises to the cell membrane. The phosphoenolpyruvate-dependent sugar phosphotransferase system (PTS), a major carbohydrate active -transport system, catalyzes the phosphorylation of incoming sugar substrates concomitant with their translocation across the cell membrane. This chain is Putative permease IIC component YwbA (ywbA), found in Bacillus subtilis (strain 168).